Consider the following 501-residue polypeptide: E3 ubiquitin-protein ligase TRIM35 (501 aa).

Position 1 is an N-acetylmethionine (methionine 1). Residue serine 8 is modified to Phosphoserine. The segment at 21-61 adopts an RING-type zinc-finger fold; sequence CAVCYDPFRDAVTLRCGHNFCRRCVSGCWEVQTTPSCPVCK. A B box-type zinc finger spans residues 96–137; sequence RSPRPCRAHRAPLTLFCLEDKELLCCACQADARHQEHRVQPI. Residues cysteine 101, histidine 104, cysteine 123, and histidine 129 each coordinate Zn(2+). Residues 200–252 adopt a coiled-coil conformation; sequence VEEQATLDAMKEESRKKHLQAEEKMKQLAEQTEALAREIERLQMEMKEDDMTF. Residues 284–495 enclose the B30.2/SPRY domain; it reads LESLQYRVWK…LRICHLRVSI (212 aa).

Belongs to the TRIM/RBCC family. In terms of assembly, interacts with PKM isoform M2, but not isoform M1; this interaction may compete with that between PKM and FGFR1, and hence reduces FGFR1-dependent tyrosine phosphorylation of PKM. Interacts with IRF7; this interaction promotes IRF7 proteasomal degradation. Interacts with TRAF3; this interaction promotes TRAF3 activation. In terms of tissue distribution, widely expressed. Highly expressed in brain, heart, kidney, spleen, skeletal muscle, lung and thymus. Lower expression found in stomach, large intestine and bone marrow.

Its subcellular location is the cytoplasm. It is found in the nucleus. It catalyses the reaction S-ubiquitinyl-[E2 ubiquitin-conjugating enzyme]-L-cysteine + [acceptor protein]-L-lysine = [E2 ubiquitin-conjugating enzyme]-L-cysteine + N(6)-ubiquitinyl-[acceptor protein]-L-lysine.. Its pathway is protein modification; protein ubiquitination. Its function is as follows. E3 ubiquitin-protein ligase that participates in multiple biological processes including cell death, glucose metabolism, and in particular, the innate immune response. Mediates 'Lys-63'-linked polyubiquitination of TRAF3 thereby promoting type I interferon production via RIG-I signaling pathway. Can also catalyze 'Lys-48'-linked polyubiquitination and proteasomal degradation of viral proteins such as influenza virus PB2. Acts as a negative feedback regulator of TLR7- and TLR9-triggered signaling. Mechanistically, promotes the 'Lys-48'-linked ubiquitination of IRF7 and induces its degradation via a proteasome-dependent pathway. Reduces FGFR1-dependent tyrosine phosphorylation of PKM, inhibiting PKM-dependent lactate production, glucose metabolism, and cell growth. The polypeptide is E3 ubiquitin-protein ligase TRIM35 (Trim35) (Mus musculus (Mouse)).